We begin with the raw amino-acid sequence, 145 residues long: MRGLLQRVRGARVEVAGEVVGAIDQGLLVLVAVEPEDSREQADKLLHKLLNYRVFSDEQGKMNLSLKDVGGGLLLVSQFTLAADTRNGMRPSFSTAAPPALGAELFDYLLQQAKAQHADVASGRFGADMQVHLVNDGPVTFMLQI.

The Gly-cisPro motif, important for rejection of L-amino acids motif lies at 137–138; the sequence is GP.

The protein belongs to the DTD family. As to quaternary structure, homodimer.

The protein resides in the cytoplasm. The catalysed reaction is glycyl-tRNA(Ala) + H2O = tRNA(Ala) + glycine + H(+). It catalyses the reaction a D-aminoacyl-tRNA + H2O = a tRNA + a D-alpha-amino acid + H(+). An aminoacyl-tRNA editing enzyme that deacylates mischarged D-aminoacyl-tRNAs. Also deacylates mischarged glycyl-tRNA(Ala), protecting cells against glycine mischarging by AlaRS. Acts via tRNA-based rather than protein-based catalysis; rejects L-amino acids rather than detecting D-amino acids in the active site. By recycling D-aminoacyl-tRNA to D-amino acids and free tRNA molecules, this enzyme counteracts the toxicity associated with the formation of D-aminoacyl-tRNA entities in vivo and helps enforce protein L-homochirality. The protein is D-aminoacyl-tRNA deacylase of Pseudomonas putida (strain ATCC 700007 / DSM 6899 / JCM 31910 / BCRC 17059 / LMG 24140 / F1).